The chain runs to 270 residues: Phosphodiesterase YaeI (270 aa).

The a divalent metal cation site is built by aspartate 56, histidine 58, aspartate 88, asparagine 120, histidine 209, and histidine 211.

The protein belongs to the metallophosphoesterase superfamily. A divalent metal cation serves as cofactor.

In terms of biological role, shows phosphodiesterase activity, hydrolyzing phosphodiester bond in the artificial chromogenic substrate bis-p-nitrophenyl phosphate (bis-pNPP). The protein is Phosphodiesterase YaeI (yaeI) of Escherichia coli (strain K12).